The chain runs to 207 residues: Chaperone protein TorD (207 aa).

This sequence belongs to the TorD/DmsD family. TorD subfamily.

It is found in the cytoplasm. Functionally, involved in the biogenesis of TorA. Acts on TorA before the insertion of the molybdenum cofactor and, as a result, probably favors a conformation of the apoenzyme that is competent for acquiring the cofactor. The chain is Chaperone protein TorD from Aggregatibacter aphrophilus (strain NJ8700) (Haemophilus aphrophilus).